The primary structure comprises 409 residues: Adenosine receptor A2a (409 aa).

Over 1-4 (MSSS) the chain is Extracellular. The chain crosses the membrane as a helical span at residues 5–29 (VYITVELVIAVLAILGNVLVCWAVW). Residues 30–39 (INSNLQNVTN) are Cytoplasmic-facing. A helical membrane pass occupies residues 40–63 (YFVVSLAAADIAVGVLAIPFAITI). The Extracellular segment spans residues 64–74 (STGFCAACHGC). Intrachain disulfides connect cysteine 68–cysteine 156, cysteine 71–cysteine 143, and cysteine 74–cysteine 163. A helical transmembrane segment spans residues 75–97 (LFFACFVLVLTQSSIFSLLTITI). Topologically, residues 98–117 (DRYIAIRIPLRYNGLVTCTR) are cytoplasmic. Residues 118 to 140 (AKGIIAICWVLSFAIGLTPMLGW) form a helical membrane-spanning segment. Over 141–170 (NNCSQPKGDKNHSESCDEGQVTCLFEDVVP) the chain is Extracellular. N-linked (GlcNAc...) asparagine glycosylation is found at asparagine 142 and asparagine 151. Glutamate 166 provides a ligand contact to adenosine. A helical membrane pass occupies residues 171 to 195 (MNYMVYYNFFAFVLVPLLLMLGIYL). The Cytoplasmic portion of the chain corresponds to 196–231 (RIFLAARRQLKQMESQPLPGERTRSTLQKEVHPAKS). The helical transmembrane segment at 232-255 (LAIIVGLFALCCLPLNIINCFTFF) threads the bilayer. Adenosine is bound at residue asparagine 250. The cysteines at positions 256 and 259 are disulfide-linked. Residues 256–263 (CPECDHAP) are Extracellular-facing. Residues 264 to 287 (PWLMYLTIILSHGNSVVNPLIYAY) form a helical membrane-spanning segment. Adenosine is bound by residues serine 274 and histidine 275. Residues 288–409 (RIREFRQTFR…PPAHGGAGVS (122 aa)) are Cytoplasmic-facing. Disordered stretches follow at residues 316-336 (TSAR…LRLN) and 369-409 (QRSH…AGVS).

The protein belongs to the G-protein coupled receptor 1 family. In terms of assembly, interacts (via cytoplasmic C-terminal domain) with USP4; the interaction is direct. May interact with DRD4. Interacts with NECAB2. Interacts (via cytoplasmic C-terminal domain) with GAS2L2; interaction enhances receptor-mediated adenylyl cyclase activity. In terms of processing, ubiquitinated. Deubiquitinated by USP4; leading to stabilization and expression at the cell surface.

It is found in the cell membrane. Receptor for adenosine. The activity of this receptor is mediated by G proteins which activate adenylyl cyclase. The protein is Adenosine receptor A2a (ADORA2A) of Cavia porcellus (Guinea pig).